A 182-amino-acid polypeptide reads, in one-letter code: Adenylate kinase (182 aa).

12–17 (GAGKGT) is an ATP binding site. The tract at residues 32 to 61 (STGELLRKEIDLDTYLGKQVKDIMNKGELV) is NMP. Residues Thr33, Arg38, 59–61 (ELV), 85–88 (GYPR), and Gln92 each bind AMP. The interval 126 to 132 (LRGRKDD) is LID. Arg127 provides a ligand contact to ATP. Residues Arg129 and Arg140 each contribute to the AMP site. Gly168 is a binding site for ATP.

The protein belongs to the adenylate kinase family. In terms of assembly, monomer.

It localises to the cytoplasm. The enzyme catalyses AMP + ATP = 2 ADP. The protein operates within purine metabolism; AMP biosynthesis via salvage pathway; AMP from ADP: step 1/1. Catalyzes the reversible transfer of the terminal phosphate group between ATP and AMP. Plays an important role in cellular energy homeostasis and in adenine nucleotide metabolism. This is Adenylate kinase from Prochlorococcus marinus (strain MIT 9515).